The primary structure comprises 210 residues: Probable septum site-determining protein MinC (210 aa).

The protein belongs to the MinC family. Interacts with MinD and FtsZ.

In terms of biological role, cell division inhibitor that blocks the formation of polar Z ring septums. Rapidly oscillates between the poles of the cell to destabilize FtsZ filaments that have formed before they mature into polar Z rings. Prevents FtsZ polymerization. The chain is Probable septum site-determining protein MinC from Clostridium novyi (strain NT).